The primary structure comprises 509 residues: Phytase A (509 aa).

The signal sequence occupies residues 1-15 (MFLLMVPLFSYLAAA). Cysteine 27 and cysteine 36 are joined by a disulfide. Residues glutamine 46, tyrosine 47, arginine 75, histidine 76, arginine 79, threonine 82, and arginine 164 each contribute to the 1D-myo-inositol hexakisphosphate site. Intrachain disulfides connect cysteine 65/cysteine 444, cysteine 216/cysteine 507, cysteine 266/cysteine 295, and cysteine 478/cysteine 486. Histidine 76 acts as the Nucleophile in catalysis. Asparagine 171 and asparagine 208 each carry an N-linked (GlcNAc...) asparagine glycan. A 1D-myo-inositol hexakisphosphate-binding site is contributed by lysine 314. 3 N-linked (GlcNAc...) asparagine glycosylation sites follow: asparagine 348, asparagine 352, and asparagine 367. 1D-myo-inositol hexakisphosphate-binding residues include histidine 376 and aspartate 377. Asparagine 401 carries an N-linked (GlcNAc...) asparagine glycan.

It belongs to the histidine acid phosphatase family. As to quaternary structure, monomer.

The protein resides in the secreted. The catalysed reaction is 1D-myo-inositol hexakisphosphate + H2O = 1D-myo-inositol 1,2,4,5,6-pentakisphosphate + phosphate. It carries out the reaction 1D-myo-inositol 1,2,4,5,6-pentakisphosphate + H2O = 1D-myo-inositol 1,2,5,6-tetrakisphosphate + phosphate. The enzyme catalyses 1D-myo-inositol 1,2,5,6-tetrakisphosphate + H2O = 1D-myo-inositol 1,2,6-trisphosphate + phosphate. It catalyses the reaction 1D-myo-inositol 1,2,6-trisphosphate + H2O = 1D-myo-inositol 1,2-bisphosphate + phosphate. The catalysed reaction is 1D-myo-inositol 1,2-bisphosphate + H2O = 1D-myo-inositol 2-phosphate + phosphate. Catalyzes the phosphate monoester hydrolysis of phytic acid (myo-inositol hexakisphosphate), which results in the stepwise formation of myo-inositol pentakis-, tetrakis-, tris-, bis-, and monophosphates, as well as the liberation of inorganic phosphate. Myo-inositol 2-monophosphate is the end product. Is also able to dephosphorylate the classic acid phosphatase substrate p-nitrophenyl phosphate. This Neurospora crassa (strain ATCC 24698 / 74-OR23-1A / CBS 708.71 / DSM 1257 / FGSC 987) protein is Phytase A (pht-1).